The chain runs to 700 residues: Peroxisomal acyl-coenzyme A oxidase 1 (700 aa).

FAD is bound by residues T147, G186, and 412–417 (CGGHGY). E437 functions as the Proton acceptor in the catalytic mechanism. The Microbody targeting signal signature appears at 698–700 (SKL).

The protein belongs to the acyl-CoA oxidase family. It depends on FAD as a cofactor.

The protein resides in the peroxisome. It catalyses the reaction a 2,3-saturated acyl-CoA + O2 = a (2E)-enoyl-CoA + H2O2. Catalyzes the desaturation of acyl-CoAs to 2-trans-enoyl-CoAs. First enzyme of the fatty acid beta-oxidation pathway. This is Peroxisomal acyl-coenzyme A oxidase 1 (acox1) from Dictyostelium discoideum (Social amoeba).